We begin with the raw amino-acid sequence, 367 residues long: D-alanine--D-alanine ligase (367 aa).

In terms of domain architecture, ATP-grasp spans 145-351; that stretch reads KRLLRDAGLP…QPALMDALIA (207 aa). 174 to 229 serves as a coordination point for ATP; the sequence is HAVGCSELFIKPANLGSSVGISKARTPQEFAAACDLALRFDGKILIERCISPVREI. Residues D306, E318, and N320 each contribute to the Mg(2+) site.

It belongs to the D-alanine--D-alanine ligase family. Requires Mg(2+) as cofactor. The cofactor is Mn(2+).

It is found in the cytoplasm. It catalyses the reaction 2 D-alanine + ATP = D-alanyl-D-alanine + ADP + phosphate + H(+). It functions in the pathway cell wall biogenesis; peptidoglycan biosynthesis. Functionally, cell wall formation. The polypeptide is D-alanine--D-alanine ligase (Bradyrhizobium sp. (strain BTAi1 / ATCC BAA-1182)).